We begin with the raw amino-acid sequence, 205 residues long: ATP synthase subunit b (205 aa).

The helical transmembrane segment at 45–65 (LGMTATAWVSLAMVIVILLLL) threads the bilayer.

It belongs to the ATPase B chain family. As to quaternary structure, F-type ATPases have 2 components, F(1) - the catalytic core - and F(0) - the membrane proton channel. F(1) has five subunits: alpha(3), beta(3), gamma(1), delta(1), epsilon(1). F(0) has three main subunits: a(1), b(2) and c(10-14). The alpha and beta chains form an alternating ring which encloses part of the gamma chain. F(1) is attached to F(0) by a central stalk formed by the gamma and epsilon chains, while a peripheral stalk is formed by the delta and b chains.

It localises to the cell inner membrane. Functionally, f(1)F(0) ATP synthase produces ATP from ADP in the presence of a proton or sodium gradient. F-type ATPases consist of two structural domains, F(1) containing the extramembraneous catalytic core and F(0) containing the membrane proton channel, linked together by a central stalk and a peripheral stalk. During catalysis, ATP synthesis in the catalytic domain of F(1) is coupled via a rotary mechanism of the central stalk subunits to proton translocation. In terms of biological role, component of the F(0) channel, it forms part of the peripheral stalk, linking F(1) to F(0). This Rhizorhabdus wittichii (strain DSM 6014 / CCUG 31198 / JCM 15750 / NBRC 105917 / EY 4224 / RW1) (Sphingomonas wittichii) protein is ATP synthase subunit b.